Here is a 125-residue protein sequence, read N- to C-terminus: Small ribosomal subunit protein uS13 (125 aa).

The disordered stretch occupies residues Gly-95 to Lys-125.

The protein belongs to the universal ribosomal protein uS13 family. Part of the 30S ribosomal subunit. Forms a loose heterodimer with protein S19. Forms two bridges to the 50S subunit in the 70S ribosome.

Located at the top of the head of the 30S subunit, it contacts several helices of the 16S rRNA. In the 70S ribosome it contacts the 23S rRNA (bridge B1a) and protein L5 of the 50S subunit (bridge B1b), connecting the 2 subunits; these bridges are implicated in subunit movement. Contacts the tRNAs in the A and P-sites. The sequence is that of Small ribosomal subunit protein uS13 from Borreliella burgdorferi (strain ATCC 35210 / DSM 4680 / CIP 102532 / B31) (Borrelia burgdorferi).